We begin with the raw amino-acid sequence, 328 residues long: GMP reductase (328 aa).

Cysteine 176 functions as the Thioimidate intermediate in the catalytic mechanism. Residue 205 to 228 (IIADGGIRTHGDIAKSIRFGASMI) participates in NADP(+) binding.

Belongs to the IMPDH/GMPR family. GuaC type 2 subfamily.

It catalyses the reaction IMP + NH4(+) + NADP(+) = GMP + NADPH + 2 H(+). In terms of biological role, catalyzes the irreversible NADPH-dependent deamination of GMP to IMP. It functions in the conversion of nucleobase, nucleoside and nucleotide derivatives of G to A nucleotides, and in maintaining the intracellular balance of A and G nucleotides. This chain is GMP reductase, found in Streptococcus pneumoniae (strain ATCC 700669 / Spain 23F-1).